The chain runs to 445 residues: Phosphoglucosamine mutase (445 aa).

Ser-101 functions as the Phosphoserine intermediate in the catalytic mechanism. Mg(2+) is bound by residues Ser-101, Asp-240, Asp-242, and Asp-244. A Phosphoserine modification is found at Ser-101.

Belongs to the phosphohexose mutase family. It depends on Mg(2+) as a cofactor. In terms of processing, activated by phosphorylation.

It catalyses the reaction alpha-D-glucosamine 1-phosphate = D-glucosamine 6-phosphate. Functionally, catalyzes the conversion of glucosamine-6-phosphate to glucosamine-1-phosphate. In Azotobacter vinelandii (strain DJ / ATCC BAA-1303), this protein is Phosphoglucosamine mutase.